A 672-amino-acid polypeptide reads, in one-letter code: Acetoacetyl-CoA synthetase (672 aa).

The protein belongs to the ATP-dependent AMP-binding enzyme family. As to expression, abundant in male subcutaneous white adipose tissue after weaning. In white adipose tissue, it is preferentially detected in mature adipocytes but not in preadipocytes. The expression in primary preadipocytes increases during the adipocyte differentiation. In brain, it is expressed in the midbrain, pons/medulla, cerebral cortex, hippocampus and cerebellum. The expression in the cerebellum is restricted primarily to glial cells, while in the cerebral cortex, it is restricted to neuronal cells.

It localises to the cytoplasm. It is found in the cytosol. The catalysed reaction is acetoacetate + ATP + CoA = acetoacetyl-CoA + AMP + diphosphate. In terms of biological role, converts acetoacetate to acetoacetyl-CoA in the cytosol. Ketone body-utilizing enzyme, responsible for the synthesis of cholesterol and fatty acids. This chain is Acetoacetyl-CoA synthetase (Aacs), found in Rattus norvegicus (Rat).